We begin with the raw amino-acid sequence, 142 residues long: MLLTADDKKHIKAILPSIAAHGDKFGGEALYRMFLINPKTKTYFPNFDFHHNSKQISAHGKKVVDALNEAANHLDNIAGSMSKLSDLHAYDLRVDPGNFPLLAHNILVTVAMYFPQQFDPHTHKALDKFLASVSSVLTSKYR.

The Globin domain occupies 2–142; it reads LLTADDKKHI…VSSVLTSKYR (141 aa). H59 lines the O2 pocket. H88 contacts heme b.

The protein belongs to the globin family. As to quaternary structure, heterotetramer of two alpha chains and two beta chains. As to expression, red blood cells.

In terms of biological role, involved in oxygen transport from the lung to the various peripheral tissues. This is Hemoglobin subunit alpha-2 (hba2) from Xenopus borealis (Kenyan clawed frog).